Reading from the N-terminus, the 437-residue chain is Adenylosuccinate synthetase 1 (437 aa).

GTP contacts are provided by residues 13-19 (GDEGKGK) and 41-43 (GHT). Asp-14 (proton acceptor) is an active-site residue. Mg(2+) contacts are provided by Asp-14 and Gly-41. IMP-binding positions include 14–17 (DEGK), 39–42 (NAGH), Thr-130, Arg-144, Gln-225, Thr-240, and Arg-310. The Proton donor role is filled by His-42. 306–312 (ATTGRLR) is a substrate binding site. GTP-binding positions include Arg-312, 338–340 (KLD), and 421–423 (STG).

The protein belongs to the adenylosuccinate synthetase family. As to quaternary structure, homodimer. Mg(2+) serves as cofactor.

It localises to the cytoplasm. The catalysed reaction is IMP + L-aspartate + GTP = N(6)-(1,2-dicarboxyethyl)-AMP + GDP + phosphate + 2 H(+). The protein operates within purine metabolism; AMP biosynthesis via de novo pathway; AMP from IMP: step 1/2. Functionally, plays an important role in the de novo pathway of purine nucleotide biosynthesis. Catalyzes the first committed step in the biosynthesis of AMP from IMP. The sequence is that of Adenylosuccinate synthetase 1 from Pseudoalteromonas translucida (strain TAC 125).